The sequence spans 421 residues: Tyrosine--tRNA ligase (421 aa).

L-tyrosine is bound at residue Tyr-36. Residues 41-50 (PTADSLHIGH) carry the 'HIGH' region motif. L-tyrosine-binding residues include Tyr-170 and Gln-174. The 'KMSKS' region signature appears at 231 to 235 (KFGKS). Lys-234 provides a ligand contact to ATP. The 68-residue stretch at 353-420 (TNIVEALIET…KKKYFMVNYQ (68 aa)) folds into the S4 RNA-binding domain.

It belongs to the class-I aminoacyl-tRNA synthetase family. TyrS type 1 subfamily. In terms of assembly, homodimer.

The protein resides in the cytoplasm. The enzyme catalyses tRNA(Tyr) + L-tyrosine + ATP = L-tyrosyl-tRNA(Tyr) + AMP + diphosphate + H(+). In terms of biological role, catalyzes the attachment of tyrosine to tRNA(Tyr) in a two-step reaction: tyrosine is first activated by ATP to form Tyr-AMP and then transferred to the acceptor end of tRNA(Tyr). The polypeptide is Tyrosine--tRNA ligase (Staphylococcus epidermidis (strain ATCC 35984 / DSM 28319 / BCRC 17069 / CCUG 31568 / BM 3577 / RP62A)).